The chain runs to 814 residues: Flagellar radial spoke protein 1 (814 aa).

At Arg243 the chain carries Asymmetric dimethylarginine. The segment at 283-346 (VQSISTGNRE…PPPPAPKVDP (64 aa)) is disordered. Residues 303 to 329 (PEEDEEEEKEEEKEEPEEGEEGEEGEG) are compositionally biased toward acidic residues. Asymmetric dimethylarginine is present on Arg428. MORN repeat units follow at residues 577–597 (YFGS…FATG), 600–622 (YAGE…DGGT), 623–645 (YVGE…DGSV), 646–662 (YTGS…GVYW), 671–685 (GEWK…GTYE), and 691–707 (FEGE…ATYT). Residues 739 to 769 (GIPPGSGDEPQLDEEGQPIEDTDKPPLPAHP) form a disordered region. Acidic residues predominate over residues 748 to 758 (PQLDEEGQPIE).

Asymmetrically dimethylated at Arg-243 and Arg-428 during flagellum resorption. Probably methylated by PRMT1.

The protein localises to the cytoplasm. Its subcellular location is the cytoskeleton. The protein resides in the flagellum axoneme. Functionally, flagellar radial spokes contribute to the regulation of dynein arm activity and thus the pattern of flagellar bending. They consist of a thin stalk, which is attached to the a subfiber of the outer doublet microtubule, and a bulbous head, which is attached to the stalk and appears to interact with the projections from the central pair of microtubules. This is Flagellar radial spoke protein 1 from Chlamydomonas reinhardtii (Chlamydomonas smithii).